We begin with the raw amino-acid sequence, 376 residues long: Chaperone protein DnaJ (376 aa).

In terms of domain architecture, J spans 5-70 (DYYEVLGVGR…DKKAAYDQFG (66 aa)). The CR-type zinc finger occupies 132–210 (GLTKELKVPT…CHGNGRVEKT (79 aa)). C145, C148, C162, C165, C184, C187, C198, and C201 together coordinate Zn(2+). CXXCXGXG motif repeat units follow at residues 145–152 (CDSCDGSG), 162–169 (CGTCHGMG), 184–191 (CPTCHGRG), and 198–205 (CSKCHGNG).

This sequence belongs to the DnaJ family. In terms of assembly, homodimer. It depends on Zn(2+) as a cofactor.

Its subcellular location is the cytoplasm. Functionally, participates actively in the response to hyperosmotic and heat shock by preventing the aggregation of stress-denatured proteins and by disaggregating proteins, also in an autonomous, DnaK-independent fashion. Unfolded proteins bind initially to DnaJ; upon interaction with the DnaJ-bound protein, DnaK hydrolyzes its bound ATP, resulting in the formation of a stable complex. GrpE releases ADP from DnaK; ATP binding to DnaK triggers the release of the substrate protein, thus completing the reaction cycle. Several rounds of ATP-dependent interactions between DnaJ, DnaK and GrpE are required for fully efficient folding. Also involved, together with DnaK and GrpE, in the DNA replication of plasmids through activation of initiation proteins. This Shewanella amazonensis (strain ATCC BAA-1098 / SB2B) protein is Chaperone protein DnaJ.